Reading from the N-terminus, the 618-residue chain is 1-deoxy-D-xylulose-5-phosphate synthase (618 aa).

Residues His70 and 111 to 113 (GHS) contribute to the thiamine diphosphate site. Position 142 (Asp142) interacts with Mg(2+). Thiamine diphosphate-binding positions include 143–144 (GS), Asn171, Tyr278, and Glu360. A Mg(2+)-binding site is contributed by Asn171.

This sequence belongs to the transketolase family. DXPS subfamily. As to quaternary structure, homodimer. The cofactor is Mg(2+). Thiamine diphosphate serves as cofactor.

It carries out the reaction D-glyceraldehyde 3-phosphate + pyruvate + H(+) = 1-deoxy-D-xylulose 5-phosphate + CO2. It participates in metabolic intermediate biosynthesis; 1-deoxy-D-xylulose 5-phosphate biosynthesis; 1-deoxy-D-xylulose 5-phosphate from D-glyceraldehyde 3-phosphate and pyruvate: step 1/1. In terms of biological role, catalyzes the acyloin condensation reaction between C atoms 2 and 3 of pyruvate and glyceraldehyde 3-phosphate to yield 1-deoxy-D-xylulose-5-phosphate (DXP). In Helicobacter pylori (strain ATCC 700392 / 26695) (Campylobacter pylori), this protein is 1-deoxy-D-xylulose-5-phosphate synthase.